Consider the following 191-residue polypeptide: Pyridoxal 5'-phosphate synthase subunit PdxT (191 aa).

52-54 serves as a coordination point for L-glutamine; sequence GES. Cys-81 serves as the catalytic Nucleophile. L-glutamine is bound by residues Arg-108 and 136–137; that span reads IR. Residues His-172 and Glu-174 each act as charge relay system in the active site.

This sequence belongs to the glutaminase PdxT/SNO family. In terms of assembly, in the presence of PdxS, forms a dodecamer of heterodimers. Only shows activity in the heterodimer.

It carries out the reaction aldehydo-D-ribose 5-phosphate + D-glyceraldehyde 3-phosphate + L-glutamine = pyridoxal 5'-phosphate + L-glutamate + phosphate + 3 H2O + H(+). The enzyme catalyses L-glutamine + H2O = L-glutamate + NH4(+). It participates in cofactor biosynthesis; pyridoxal 5'-phosphate biosynthesis. Functionally, catalyzes the hydrolysis of glutamine to glutamate and ammonia as part of the biosynthesis of pyridoxal 5'-phosphate. The resulting ammonia molecule is channeled to the active site of PdxS. The sequence is that of Pyridoxal 5'-phosphate synthase subunit PdxT from Actinobacillus pleuropneumoniae serotype 7 (strain AP76).